Consider the following 176-residue polypeptide: Insulin-like growth factor 1 (176 aa).

The interval 45–73 (GPETLCGAELVDTLQFVCGERGFYFSKPT) is b. 3 disulfide bridges follow: Cys-50/Cys-92, Cys-62/Cys-105, and Cys-91/Cys-96. A c region spans residues 74–85 (GYGPSSRRSHNR). Residues 86–106 (GIVDECCFQSCELRRLEMYCA) form an a region. Positions 107–114 (PVKSGKAA) are d. The propeptide at 115–176 (RSVRAQRHTD…GNTGGRNYRM (62 aa)) is e peptide. The interval 115 to 176 (RSVRAQRHTD…GNTGGRNYRM (62 aa)) is disordered. Over residues 140 to 161 (RGTERRTAQHPDKTKPKKEVHQ) the composition is skewed to basic and acidic residues.

Belongs to the insulin family.

It is found in the secreted. The insulin-like growth factors, isolated from plasma, are structurally and functionally related to insulin but have a much higher growth-promoting activity. Acts as a ligand for IGF1R. Binds to the alpha subunit of IGF1R, leading to the activation of the intrinsic tyrosine kinase activity which autophosphorylates tyrosine residues in the beta subunit thus initiatiating a cascade of down-stream signaling events leading to activation of the PI3K-AKT/PKB and the Ras-MAPK pathways. Binds to integrins. Its binding to integrins and subsequent ternary complex formation with integrins and IGFR1 are essential for IGF1 signaling. The protein is Insulin-like growth factor 1 of Oncorhynchus mykiss (Rainbow trout).